The primary structure comprises 364 residues: GTPase Obg (364 aa).

In terms of domain architecture, Obg spans M1–L159. Residues I128 to G147 are disordered. Residues A160 to D334 enclose the OBG-type G domain. GTP is bound by residues G166–S173, F191–H195, D213–G216, N284–D287, and S315–L317. Mg(2+) is bound by residues S173 and T193. The segment at E340–A364 is disordered. Over residues Q349 to A364 the composition is skewed to basic and acidic residues.

Belongs to the TRAFAC class OBG-HflX-like GTPase superfamily. OBG GTPase family. In terms of assembly, monomer. It depends on Mg(2+) as a cofactor.

It localises to the cytoplasm. An essential GTPase which binds GTP, GDP and possibly (p)ppGpp with moderate affinity, with high nucleotide exchange rates and a fairly low GTP hydrolysis rate. Plays a role in control of the cell cycle, stress response, ribosome biogenesis and in those bacteria that undergo differentiation, in morphogenesis control. This Ralstonia pickettii (strain 12J) protein is GTPase Obg.